The following is a 276-amino-acid chain: Glutamate 5-kinase (276 aa).

An ATP-binding site is contributed by Lys14. Substrate-binding residues include Ser54, Asp141, and Asn157. ATP contacts are provided by residues 177–178 (SD) and 219–225 (TGGMLTK).

Belongs to the glutamate 5-kinase family.

The protein localises to the cytoplasm. The catalysed reaction is L-glutamate + ATP = L-glutamyl 5-phosphate + ADP. Its pathway is amino-acid biosynthesis; L-proline biosynthesis; L-glutamate 5-semialdehyde from L-glutamate: step 1/2. Its function is as follows. Catalyzes the transfer of a phosphate group to glutamate to form L-glutamate 5-phosphate. In Listeria monocytogenes serotype 4a (strain HCC23), this protein is Glutamate 5-kinase.